Here is a 466-residue protein sequence, read N- to C-terminus: Chromosomal replication initiator protein DnaA (466 aa).

Positions 1–86 are domain I, interacts with DnaA modulators; it reads MSLSLWQQCL…EVGTKPVTQT (86 aa). Positions 86-129 are domain II; sequence TLKTPVHNVVAPTQTTTAQPQRVAPAARSGWDNVPAPAEPTYRS. The segment at 130–346 is domain III, AAA+ region; that stretch reads NVNVKHTFDN…GALNRVIANA (217 aa). Gly-174, Gly-176, Lys-177, and Thr-178 together coordinate ATP. The domain IV, binds dsDNA stretch occupies residues 347–466; the sequence is NFTGRAITID…FSNLIRTLSS (120 aa).

This sequence belongs to the DnaA family. As to quaternary structure, oligomerizes as a right-handed, spiral filament on DNA at oriC.

Its subcellular location is the cytoplasm. Functionally, plays an essential role in the initiation and regulation of chromosomal replication. ATP-DnaA binds to the origin of replication (oriC) to initiate formation of the DNA replication initiation complex once per cell cycle. Binds the DnaA box (a 9 base pair repeat at the origin) and separates the double-stranded (ds)DNA. Forms a right-handed helical filament on oriC DNA; dsDNA binds to the exterior of the filament while single-stranded (ss)DNA is stabiized in the filament's interior. The ATP-DnaA-oriC complex binds and stabilizes one strand of the AT-rich DNA unwinding element (DUE), permitting loading of DNA polymerase. After initiation quickly degrades to an ADP-DnaA complex that is not apt for DNA replication. Binds acidic phospholipids. The protein is Chromosomal replication initiator protein DnaA of Salmonella dublin (strain CT_02021853).